A 142-amino-acid chain; its full sequence is Lysozyme X (142 aa).

An N-terminal signal peptide occupies residues 1–19; sequence MRALLGICVLALVTPAVLG. A C-type lysozyme domain is found at 20 to 142; the sequence is RTMDRCSLAR…YLPPIDDCFV (123 aa). Disulfide bonds link Cys-25/Cys-140, Cys-46/Cys-130, Cys-81/Cys-97, and Cys-93/Cys-111. Active-site residues include Glu-51 and Asp-69.

This sequence belongs to the glycosyl hydrolase 22 family. As to expression, found in the midgut.

The enzyme catalyses Hydrolysis of (1-&gt;4)-beta-linkages between N-acetylmuramic acid and N-acetyl-D-glucosamine residues in a peptidoglycan and between N-acetyl-D-glucosamine residues in chitodextrins.. Unlikely to play an active role in the humoral immune defense. May have a function in the digestion of bacteria in the food. May be involved in the clearance of bacteria from the larval gut before metamorphosis. This is Lysozyme X (LysX) from Drosophila melanogaster (Fruit fly).